The chain runs to 89 residues: N.vectensis toxin 7 (89 aa).

The signal sequence occupies residues 1-21 (MASFFKIAVICLVMLVVCSNA). Intrachain disulfides connect Cys44–Cys77, Cys46–Cys69, and Cys62–Cys78.

Expressed in ectodermal gland cells.

Probable toxin. This chain is N.vectensis toxin 7, found in Nematostella vectensis (Starlet sea anemone).